A 431-amino-acid chain; its full sequence is Glucose-1-phosphate adenylyltransferase (431 aa).

Position 39 (Lys-39) interacts with beta-D-fructose 1,6-bisphosphate. Arg-40, His-46, and Arg-52 together coordinate AMP. Position 114 (Tyr-114) interacts with alpha-D-glucose 1-phosphate. Arg-130 contributes to the AMP binding site. Residues Gly-179, 194-195, and Ser-212 each bind alpha-D-glucose 1-phosphate; that span reads EK. Residues Glu-370 and Arg-386 each coordinate AMP. Beta-D-fructose 1,6-bisphosphate-binding positions include 419 to 423 and 429 to 431; these read REMLR and QER.

This sequence belongs to the bacterial/plant glucose-1-phosphate adenylyltransferase family. Homotetramer.

It carries out the reaction alpha-D-glucose 1-phosphate + ATP + H(+) = ADP-alpha-D-glucose + diphosphate. Its pathway is glycan biosynthesis; glycogen biosynthesis. Allosterically activated by fructose-1,6-bisphosphate (F16BP) and inhibited by AMP. Involved in the biosynthesis of ADP-glucose, a building block required for the elongation reactions to produce glycogen. Catalyzes the reaction between ATP and alpha-D-glucose 1-phosphate (G1P) to produce pyrophosphate and ADP-Glc. The chain is Glucose-1-phosphate adenylyltransferase from Salmonella dublin (strain CT_02021853).